Reading from the N-terminus, the 149-residue chain is Deoxyuridine 5'-triphosphate nucleotidohydrolase (149 aa).

Residues 68–70, asparagine 81, 85–87, and methionine 95 each bind substrate; these read RSG and LID.

This sequence belongs to the dUTPase family. Requires Mg(2+) as cofactor.

The catalysed reaction is dUTP + H2O = dUMP + diphosphate + H(+). It participates in pyrimidine metabolism; dUMP biosynthesis; dUMP from dCTP (dUTP route): step 2/2. Functionally, this enzyme is involved in nucleotide metabolism: it produces dUMP, the immediate precursor of thymidine nucleotides and it decreases the intracellular concentration of dUTP so that uracil cannot be incorporated into DNA. The chain is Deoxyuridine 5'-triphosphate nucleotidohydrolase from Bordetella pertussis (strain Tohama I / ATCC BAA-589 / NCTC 13251).